Consider the following 263-residue polypeptide: Acetyl-coenzyme A carboxylase carboxyl transferase subunit beta (263 aa).

The CoA carboxyltransferase N-terminal domain occupies 1–263 (MDCPSCKVSY…LKETPKKKKA (263 aa)). Cysteine 3, cysteine 6, cysteine 22, and cysteine 25 together coordinate Zn(2+). The C4-type zinc-finger motif lies at 3-25 (CPSCKVSYDEEVFTDNLMVCPHC).

It belongs to the AccD/PCCB family. As to quaternary structure, acetyl-CoA carboxylase is a heterohexamer composed of biotin carboxyl carrier protein (AccB), biotin carboxylase (AccC) and two subunits each of ACCase subunit alpha (AccA) and ACCase subunit beta (AccD). It depends on Zn(2+) as a cofactor.

Its subcellular location is the cytoplasm. It catalyses the reaction N(6)-carboxybiotinyl-L-lysyl-[protein] + acetyl-CoA = N(6)-biotinyl-L-lysyl-[protein] + malonyl-CoA. It participates in lipid metabolism; malonyl-CoA biosynthesis; malonyl-CoA from acetyl-CoA: step 1/1. Functionally, component of the acetyl coenzyme A carboxylase (ACC) complex. Biotin carboxylase (BC) catalyzes the carboxylation of biotin on its carrier protein (BCCP) and then the CO(2) group is transferred by the transcarboxylase to acetyl-CoA to form malonyl-CoA. This is Acetyl-coenzyme A carboxylase carboxyl transferase subunit beta from Treponema denticola (strain ATCC 35405 / DSM 14222 / CIP 103919 / JCM 8153 / KCTC 15104).